The primary structure comprises 782 residues: Protein NEDD1 (782 aa).

WD repeat units follow at residues 1–34, 41–80, 90–130, 133–172, 176–216, 220–260, 262–301, and 307–358; these read MMSNLVEPSWRLLAASGGDTVKLFDVSADSGDPC, SPGCAVNSVKWNHTNLVVASTGEDKKISLWRKNGQSLGTV, SAEE…CIKK, GHTSTITGVMYNCKDEHLASVSVGGDLIVHNLASGARATE, PNGQ…PKMS, QHSA…SSSC, AYEAPFSSLAFGDNGYILVAGTSNGRVVFYDIRGKPQPVT, and SNSE…TPSA. Disordered stretches follow at residues 350-393 and 467-512; these read PLPS…WPSG and PIFD…EAWG. 3 stretches are compositionally biased toward polar residues: residues 352 to 362, 370 to 386, and 488 to 498; these read PSTTPSASQSA, VSASTVNASSVEQTPNR, and SFGSITPTASS. Residues 753–782 are a coiled coil; that stretch reads VLSSILENQAEQMKELKLLRKENQELRQRL.

As to expression, expressed in root meristematic cells.

It localises to the nucleus envelope. The protein resides in the chromosome. Its subcellular location is the centromere. The protein localises to the kinetochore. It is found in the cytoplasm. It localises to the cytoskeleton. The protein resides in the phragmoplast. Its subcellular location is the microtubule organizing center. Regulates microtubules organization in a centrosome-independent manner. Required for the spindle to be positioned correctly and for the function of gamma-tubulin in organizing phragmoplast microtubules. Component of active gamma-tubulin ring complexes (gamma-TuRCs) associated with cortical microtubules in interphase cells. Mediates gamma-TuRC recruitment to the nucleation sites and is important for determining the ratio of branched to parallel nucleation. May mediate the localization of GCP2 and GCP3 to the nuclear envelope. This Arabidopsis thaliana (Mouse-ear cress) protein is Protein NEDD1.